The primary structure comprises 727 residues: Anaphase-promoting complex subunit 5 (727 aa).

Residue serine 180 is modified to Phosphoserine. TPR repeat units lie at residues 194–234, 235–285, 286–322, 323–359, 360–390, 391–438, 439–472, 473–512, 513–552, 553–592, 593–632, 633–668, and 669–708; these read QKQA…FNPD, FAEA…GRSL, RYAA…SNDH, VCLQ…FGLP, RAFA…SELI, DISI…TESF, AVAL…FPPN, SQHA…ALNG, IEGV…TEMV, ISVL…QYLA, SETV…ILDK, GRAM…NLTE, and AKNY…CAMV. Threonine 217 carries the post-translational modification Phosphothreonine.

The protein belongs to the APC5 family. The mammalian APC/C is composed at least of 14 distinct subunits ANAPC1, ANAPC2, CDC27/APC3, ANAPC4, ANAPC5, CDC16/APC6, ANAPC7, CDC23/APC8, ANAPC10, ANAPC11, CDC26/APC12, ANAPC13, ANAPC15 and ANAPC16 that assemble into a complex of at least 19 chains with a combined molecular mass of around 1.2 MDa; APC/C interacts with FZR1 and FBXO5.

It is found in the nucleus. The protein resides in the cytoplasm. It localises to the cytoskeleton. The protein localises to the spindle. It functions in the pathway protein modification; protein ubiquitination. Functionally, component of the anaphase promoting complex/cyclosome (APC/C), a cell cycle-regulated E3 ubiquitin ligase that controls progression through mitosis and the G1 phase of the cell cycle. The APC/C complex acts by mediating ubiquitination and subsequent degradation of target proteins: it mainly mediates the formation of 'Lys-11'-linked polyubiquitin chains and, to a lower extent, the formation of 'Lys-48'- and 'Lys-63'-linked polyubiquitin chains. The APC/C complex catalyzes assembly of branched 'Lys-11'-/'Lys-48'-linked branched ubiquitin chains on target proteins. The polypeptide is Anaphase-promoting complex subunit 5 (Anapc5) (Rattus norvegicus (Rat)).